The following is a 98-amino-acid chain: Small ribosomal subunit protein eS24 (98 aa).

This sequence belongs to the eukaryotic ribosomal protein eS24 family.

The sequence is that of Small ribosomal subunit protein eS24 from Thermococcus onnurineus (strain NA1).